The primary structure comprises 315 residues: tRNA dimethylallyltransferase (315 aa).

An ATP-binding site is contributed by 13 to 20 (GPTASGKT). 15 to 20 (TASGKT) contributes to the substrate binding site. Interaction with substrate tRNA regions lie at residues 38-41 (DSAL), 162-166 (QRLSR), 243-248 (RCVGYR), and 276-283 (KRQITWLR).

The protein belongs to the IPP transferase family. In terms of assembly, monomer. The cofactor is Mg(2+).

The catalysed reaction is adenosine(37) in tRNA + dimethylallyl diphosphate = N(6)-dimethylallyladenosine(37) in tRNA + diphosphate. Its function is as follows. Catalyzes the transfer of a dimethylallyl group onto the adenine at position 37 in tRNAs that read codons beginning with uridine, leading to the formation of N6-(dimethylallyl)adenosine (i(6)A). This is tRNA dimethylallyltransferase from Vibrio vulnificus (strain CMCP6).